A 163-amino-acid polypeptide reads, in one-letter code: Small ribosomal subunit protein bS18c (163 aa).

2 disordered regions span residues 1–52 and 144–163; these read MYIS…IGPG and NLRN…SSDC. Over residues 7 to 48 the composition is skewed to basic residues; sequence PFRKSKQPFRKSKQPFHKSKQPFRKFKQPFRKSKQPFRRRSR.

Belongs to the bacterial ribosomal protein bS18 family. As to quaternary structure, part of the 30S ribosomal subunit.

It is found in the plastid. Its subcellular location is the chloroplast. The sequence is that of Small ribosomal subunit protein bS18c from Saccharum hybrid (Sugarcane).